The chain runs to 310 residues: Olfactory receptor 10G2 (310 aa).

Residues 1-29 are Extracellular-facing; that stretch reads MGKTKNTSLDAVVTDFILLGLSHPPNLRS. Residue asparagine 6 is glycosylated (N-linked (GlcNAc...) asparagine). The chain crosses the membrane as a helical span at residues 30-50; sequence LLFLVFFIIYILTQLGNLLIL. The Cytoplasmic portion of the chain corresponds to 51-58; it reads LTMWADPK. Residues 59-80 traverse the membrane as a helical segment; it reads LCARPMYILLGVLSFLDMWLSS. Residues 81-104 are Extracellular-facing; that stretch reads VTVPLLILDFTPSIKAIPFGGCVA. A disulfide bridge connects residues cysteine 102 and cysteine 194. The helical transmembrane segment at 105 to 125 threads the bilayer; that stretch reads QLYFFHFLGSTQCFLYTLMAY. The Cytoplasmic portion of the chain corresponds to 126-144; it reads DRYLAICQPLRYPVLMNGR. The chain crosses the membrane as a helical span at residues 145 to 165; that stretch reads LCTVLVAGAWVAGSMHGSIQA. Topologically, residues 166–202 are extracellular; the sequence is TLTFRLPYCGPNQVDYFICDIPAVLRLACADTTVNEL. The helical transmembrane segment at 203–222 threads the bilayer; that stretch reads VTFVDVGVVAASCFMLILLS. The Cytoplasmic portion of the chain corresponds to 223 to 242; the sequence is YANIVNAILKIRTTDGRRRA. A helical transmembrane segment spans residues 243-263; it reads FSTCGSHLIVVTVYYVPCIFI. At 264–274 the chain is on the extracellular side; sequence YLRAGSKDPLD. The chain crosses the membrane as a helical span at residues 275–295; sequence GAAAVFYTVVTPLLNPLIYTL. Residues 296–310 lie on the Cytoplasmic side of the membrane; sequence RNQEVKSALKRITAG.

This sequence belongs to the G-protein coupled receptor 1 family.

Its subcellular location is the cell membrane. Functionally, odorant receptor. In Homo sapiens (Human), this protein is Olfactory receptor 10G2 (OR10G2).